A 179-amino-acid polypeptide reads, in one-letter code: Protein P20B (179 aa).

The chain is Protein P20B from Vitis vinifera (Grape).